A 28-amino-acid polypeptide reads, in one-letter code: Odorant-binding protein 1 (28 aa).

The protein belongs to the calycin superfamily. Lipocalin family. As to expression, nasal mucosa.

Its subcellular location is the secreted. The protein resides in the extracellular space. Its function is as follows. This soluble protein may play a specific role in odor discrimination and perception. The sequence is that of Odorant-binding protein 1 from Hystrix cristata (North African crested porcupine).